A 1153-amino-acid polypeptide reads, in one-letter code: MMDNQSKPSIIPSYEWYERSINRVEDSSSSINNVSSKLVFFFIIGEMKDLKIPQNTRLLLSTKHYILPMIHLEDKQKETINFPSKKVRIIFGYFNNSNKEGEITLFLDTELEKSHNLNITNKHINNDQPLKGLSKNFNSLSLLLQSLQRNYNASLLTFDKSTNTTIKQLPPPLPQPQPQPHQQQPHNKKQIDDIELKKKKEIEEIDEIEDFESTQPLVVDEVDDNYDDIDNNNNNNNNSNNDDDKLEDIEEHNEEEEDQIHLFTHAHSLTQKPQLPKKQQQSFDEFQRKIKDNKSPQKLKLQQQQQQQQQQKQSKHFDAFEEELLEQQKIHEHKLQQQQQIKPQKQQLQQPQQQPQQQPQQQPQQQPQQQPQQQPQQQQKQQQKQQPTPKKIINSLQLNNVNNNNNNNNNNNNNNNNNNNNNNKNKKEIMPGWLEKAILSNSFPLNPCGQIVSLPEDSHKKKNISLYLSDNICYIQIIVSENTVREALENKKNVFNFGFLFGCVIEILDYTIKPDQDFSKFVLNINKFVILNKNKHSPISPTPISKHPRVISLLRIKKDMNKNASNNIGNNIIYSESLISSDQLEILNSLELWNLPTQITKQLSLQDLTEGNLSMLDSTNDGSSQEYEEEEEEEKNQKNFEKEEEGENIQMRQLYEKYREEHQSQVKKQQIIQKLKQQQQQQQQQQQEKEKQQQEKQQDEEMSDFENIQNLMEEVQKSDDNNNNNDNNNNNNNNQTSKRKRLNEFESDPDDIYDLLESNTFAGHQVKGVDENKKLRVDSEDQQTKKLTTTTTTTTTTTNTNNNNNNNNSGIDSGTKTIEDDNQLDEDFFDGLNYSIIASSGGSNNNNNNDQNDSITTKEKERSETIKTHNEDEKKNSLSFIKFENPIPSNNPITTTVTTTSASPKITEIPKQPYAIKPSISSYSIRPTLPTKPSLIKSLNNNNNNNNNNNINNINNIGNKNTTVNNSNHSNHSNNNINNNNIFKNSNPIVDTNFSSTTKTDEAQQSKIFTGNQLPKSPINNENVVNNNNNNEINNTTTTTTNNNSGIHKNNNNYNSDNSDNSDDGLKQEKEEQKEEQKENKNNNNNNNNNNNNNNNNNNNNNNNEVLNFSFSLTSSSGTNVKKTIPILLADYSCTSVIQEGGFEIIVKRKENK.

Disordered regions lie at residues 164–193 (TTIKQLPPPLPQPQPQPHQQQPHNKKQIDD), 224–245 (DNYDDIDNNNNNNNNSNNDDDK), 294–316 (KSPQKLKLQQQQQQQQQQKQSKH), 332–427 (EHKL…KNKK), 613–648 (LSMLDSTNDGSSQEYEEEEEEEKNQKNFEKEEEGEN), 683–703 (QQQQQEKEKQQQEKQQDEEMS), 717–740 (KSDDNNNNNDNNNNNNNNQTSKRK), 772–819 (NKKL…KTIE), 838–874 (ASSGGSNNNNNNDQNDSITTKEKERSETIKTHNEDEK), and 942–1106 (NNNN…NNEV). Pro residues predominate over residues 169–179 (LPPPLPQPQPQ). 4 stretches are compositionally biased toward low complexity: residues 231–240 (NNNNNNNNSN), 298–312 (KLKLQQQQQQQQQQK), 336–391 (QQQQ…TPKK), and 399–423 (NNVNNNNNNNNNNNNNNNNNNNNNN). The span at 613–625 (LSMLDSTNDGSSQ) shows a compositional bias: polar residues. The segment covering 687 to 699 (QEKEKQQQEKQQD) has biased composition (basic and acidic residues). Positions 721–734 (NNNNNDNNNNNNNN) are enriched in low complexity. Basic and acidic residues predominate over residues 772 to 784 (NKKLRVDSEDQQT). Composition is skewed to low complexity over residues 788–808 (TTTTTTTTTTTNTNNNNNNNN) and 839–854 (SSGGSNNNNNNDQNDS). A compositionally biased stretch (basic and acidic residues) spans 856 to 874 (TTKEKERSETIKTHNEDEK). Over residues 942–987 (NNNNNNNNNINNINNIGNKNTTVNNSNHSNHSNNNINNNNIFKNSN) the composition is skewed to low complexity. Polar residues-rich tracts occupy residues 988–998 (PIVDTNFSSTT) and 1005–1015 (QSKIFTGNQLP). The segment covering 1019–1059 (INNENVVNNNNNNEINNTTTTTTNNNSGIHKNNNNYNSDNS) has biased composition (low complexity). Basic and acidic residues predominate over residues 1064–1081 (DGLKQEKEEQKEEQKENK). Over residues 1082–1105 (NNNNNNNNNNNNNNNNNNNNNNNE) the composition is skewed to low complexity.

This is an uncharacterized protein from Dictyostelium discoideum (Social amoeba).